A 161-amino-acid chain; its full sequence is SsrA-binding protein (161 aa).

The tract at residues 1–23 is disordered; the sequence is MATKKNEQIKGRTDGLVAENRRS.

It belongs to the SmpB family.

It localises to the cytoplasm. Required for rescue of stalled ribosomes mediated by trans-translation. Binds to transfer-messenger RNA (tmRNA), required for stable association of tmRNA with ribosomes. tmRNA and SmpB together mimic tRNA shape, replacing the anticodon stem-loop with SmpB. tmRNA is encoded by the ssrA gene; the 2 termini fold to resemble tRNA(Ala) and it encodes a 'tag peptide', a short internal open reading frame. During trans-translation Ala-aminoacylated tmRNA acts like a tRNA, entering the A-site of stalled ribosomes, displacing the stalled mRNA. The ribosome then switches to translate the ORF on the tmRNA; the nascent peptide is terminated with the 'tag peptide' encoded by the tmRNA and targeted for degradation. The ribosome is freed to recommence translation, which seems to be the essential function of trans-translation. In Hyphomonas neptunium (strain ATCC 15444), this protein is SsrA-binding protein.